Here is a 35-residue protein sequence, read N- to C-terminus: PTEN upstream open reading frame MP31 (35 aa).

In terms of assembly, interacts with lactate dehydrogenases LDHA and LDHB; interaction with mitochondrial LDH leads to inhibition of lactate dehydrogenase activity, preventing conversion of lactate to pyruvate. In terms of tissue distribution, detected in brain, kidney and liver (at protein level).

It localises to the mitochondrion. In terms of biological role, inhibits lactate dehydrogenase (LDH)-mediated conversion of lactate to pyruvate in mitochondria by competing with mitochondrial LDH for binding to NAD(+). Also inhibits cellular lactate utilization. The sequence is that of PTEN upstream open reading frame MP31 from Mus musculus (Mouse).